Reading from the N-terminus, the 307-residue chain is MTSKLEQLKQYTTVVADTGDFDAIARLKPVDATTNPSLLLKAAALPRYAEHLRRATAGSGGDAGLACDRFAVAVGKDILGVIPGRISTEVDARLSFDSEATLARAHRLVELYEEQGVGRERVLIKIASTWEGIRAAEILEREGIQTNLTLLFSFAQAAACADAGVFLISPFVGRIYDWYRKSENRDYVGAEDPGVRSVSRIYRYYKANGYKTVVMGASFRNLGQIEQLAGCDRLTISPDLLQQLADSQGELPRLLLPGDGEPRQVLDESAFRWQMNEDAMATEKLAEGIRLFARDQEKLEYQLATRH.

The Schiff-base intermediate with substrate role is filled by K125.

The protein belongs to the transaldolase family. Type 1 subfamily. As to quaternary structure, homodimer.

The protein localises to the cytoplasm. It carries out the reaction D-sedoheptulose 7-phosphate + D-glyceraldehyde 3-phosphate = D-erythrose 4-phosphate + beta-D-fructose 6-phosphate. The protein operates within carbohydrate degradation; pentose phosphate pathway; D-glyceraldehyde 3-phosphate and beta-D-fructose 6-phosphate from D-ribose 5-phosphate and D-xylulose 5-phosphate (non-oxidative stage): step 2/3. In terms of biological role, transaldolase is important for the balance of metabolites in the pentose-phosphate pathway. This is Transaldolase from Pseudomonas paraeruginosa (strain DSM 24068 / PA7) (Pseudomonas aeruginosa (strain PA7)).